Reading from the N-terminus, the 347-residue chain is Beta-hexosaminidase (347 aa).

Substrate-binding positions include aspartate 64, arginine 72, arginine 138, and 168-169 (KH). Histidine 181 acts as the Proton donor/acceptor in catalysis. Aspartate 251 (nucleophile) is an active-site residue.

This sequence belongs to the glycosyl hydrolase 3 family. NagZ subfamily.

It is found in the cytoplasm. It catalyses the reaction Hydrolysis of terminal non-reducing N-acetyl-D-hexosamine residues in N-acetyl-beta-D-hexosaminides.. The protein operates within cell wall biogenesis; peptidoglycan recycling. Its function is as follows. Plays a role in peptidoglycan recycling by cleaving the terminal beta-1,4-linked N-acetylglucosamine (GlcNAc) from peptide-linked peptidoglycan fragments, giving rise to free GlcNAc, anhydro-N-acetylmuramic acid and anhydro-N-acetylmuramic acid-linked peptides. This chain is Beta-hexosaminidase, found in Thioalkalivibrio sulfidiphilus (strain HL-EbGR7).